Here is an 86-residue protein sequence, read N- to C-terminus: Small ribosomal subunit protein bS20 (86 aa).

Belongs to the bacterial ribosomal protein bS20 family.

Functionally, binds directly to 16S ribosomal RNA. The polypeptide is Small ribosomal subunit protein bS20 (Pseudarthrobacter chlorophenolicus (strain ATCC 700700 / DSM 12829 / CIP 107037 / JCM 12360 / KCTC 9906 / NCIMB 13794 / A6) (Arthrobacter chlorophenolicus)).